Consider the following 141-residue polypeptide: Flagellar assembly factor FliW (141 aa).

It belongs to the FliW family. As to quaternary structure, interacts with translational regulator CsrA and flagellin(s).

It is found in the cytoplasm. Functionally, acts as an anti-CsrA protein, binds CsrA and prevents it from repressing translation of its target genes, one of which is flagellin. Binds to flagellin and participates in the assembly of the flagellum. The chain is Flagellar assembly factor FliW from Clostridium botulinum (strain Alaska E43 / Type E3).